A 296-amino-acid polypeptide reads, in one-letter code: 5,10-methylenetetrahydrofolate reductase (296 aa).

Residue Glu-28 is the Proton donor/acceptor of the active site. Thr-59 is a binding site for NADH. The FAD site is built by Tyr-60, Ala-62, His-88, Arg-118, Gly-119, Asp-120, Ala-132, Tyr-152, His-156, Ala-159, Asp-165, Asn-168, Arg-171, and Lys-172. Asp-120 contributes to the (6S)-5-methyl-5,6,7,8-tetrahydrofolate binding site. Gln-183 is a binding site for NADH. The (6S)-5-methyl-5,6,7,8-tetrahydrofolate site is built by Gln-183, Gln-219, and Arg-279.

The protein belongs to the methylenetetrahydrofolate reductase family. As to quaternary structure, homotetramer. It depends on FAD as a cofactor.

The catalysed reaction is (6S)-5-methyl-5,6,7,8-tetrahydrofolate + NAD(+) = (6R)-5,10-methylene-5,6,7,8-tetrahydrofolate + NADH + H(+). It functions in the pathway one-carbon metabolism; tetrahydrofolate interconversion. Its pathway is amino-acid biosynthesis; L-methionine biosynthesis via de novo pathway. Its function is as follows. Catalyzes the NADH-dependent reduction of 5,10-methylenetetrahydrofolate to 5-methyltetrahydrofolate. Is required to provide the methyl group necessary for methionine synthetase to convert homocysteine to methionine; the methyl group is given by 5-methyltetrahydrofolate. Can also use NADPH as the reductant, but much less effectively than NADH. The chain is 5,10-methylenetetrahydrofolate reductase from Escherichia coli (strain K12).